The chain runs to 350 residues: MDMTFFRAALLGACVLLSGCDSATTPASPASTATVLDGKTMGTFWRVSVIGVDEAKAEALRAKVQAQLDADDRLLSTWKNDSALMRFNHAADTRPWPVSEAMVDIVTLSLRIGAKTHGAMDITVGPLVNLWGFGPDKQPVTTPDAQAIAAAKARTGLQHLQVINQSGRQFLQKDIPDLFVDLSTVGEGYAADHLARLMEQEGISRYLVSVGGALVSRGMNGEGKPWRVAIQKPTDRENAVQAIVDINGHGISTSGSYRNYYELDGKRISHVIDPQTGQPITHKLVSVTVIAPTALEADGWDTGLMVLGPEKAQQVVREQGLAVYMIVKEGEGFKTWMSPQFRTFLVGEKN.

The signal sequence occupies residues 1 to 19 (MDMTFFRAALLGACVLLSG). Residue Cys-20 is the site of N-palmitoyl cysteine attachment. A lipid anchor (S-diacylglycerol cysteine) is attached at Cys-20. Residues Met-41, Trp-78, 119–121 (AMD), and Asp-181 contribute to the FAD site. Thr-184 is a Mg(2+) binding site. Positions 187 and 272 each coordinate FAD. Asp-298, Asp-301, and Thr-302 together coordinate Mg(2+).

It belongs to the ApbE family. The cofactor is Mg(2+).

The protein resides in the cell inner membrane. It carries out the reaction L-threonyl-[protein] + FAD = FMN-L-threonyl-[protein] + AMP + H(+). In terms of biological role, flavin transferase that catalyzes the transfer of the FMN moiety of FAD and its covalent binding to the hydroxyl group of a threonine residue in a target flavoprotein such as NqrB and NqrC, two subunits of the NQR complex. The polypeptide is FAD:protein FMN transferase (Klebsiella pneumoniae (strain 342)).